Here is a 136-residue protein sequence, read N- to C-terminus: Putative pre-16S rRNA nuclease (136 aa).

This sequence belongs to the YqgF nuclease family.

Its subcellular location is the cytoplasm. Its function is as follows. Could be a nuclease involved in processing of the 5'-end of pre-16S rRNA. The chain is Putative pre-16S rRNA nuclease from Francisella tularensis subsp. holarctica (strain FTNF002-00 / FTA).